A 195-amino-acid polypeptide reads, in one-letter code: Pyruvoyl-dependent arginine decarboxylase AaxB (195 aa).

The residue at position 53 (serine 53) is a Pyruvic acid (Ser).

Belongs to the pyruvoyl-dependent arginine decarboxylase family. In terms of assembly, trimer of an alpha-beta dimer. Pyruvate is required as a cofactor.

The protein resides in the cytoplasm. The catalysed reaction is L-arginine + H(+) = agmatine + CO2. Its function is as follows. Part of the AaxABC system, catalyzes the decarboxylation of L-arginine. The arginine uptake by the bacterium in the macrophage may be a virulence factor against the host innate immune response. This Chlamydia caviae (strain ATCC VR-813 / DSM 19441 / 03DC25 / GPIC) (Chlamydophila caviae) protein is Pyruvoyl-dependent arginine decarboxylase AaxB (aaxB).